Here is a 1247-residue protein sequence, read N- to C-terminus: Nitric oxide synthase (1247 aa).

Residues 13–33 are disordered; it reads EVAEGRESSKANHIGEERRGY. Ser-146 provides a ligand contact to (6R)-L-erythro-5,6,7,8-tetrahydrobiopterin. Residue Cys-224 participates in heme b binding. Gln-287, Trp-396, Tyr-397, Glu-401, and Asn-406 together coordinate L-arginine. Residues Trp-487 and Phe-500 each coordinate (6R)-L-erythro-5,6,7,8-tetrahydrobiopterin. Tyr-515 is a heme b binding site. The calmodulin-binding stretch occupies residues 537–557; that stretch reads PRRKFNFKQIARAVKFTSKLF. The 200-residue stretch at 567 to 766 folds into the Flavodoxin-like domain; sequence ATVLYATETG…AFRKWAPEVF (200 aa). 712-743 provides a ligand contact to FMN; the sequence is VFALGSSAYPNFCAFGKYIDNILGELGGERLM. One can recognise an FAD-binding FR-type domain in the interval 795–1065; that stretch reads NTVRYAPVAE…VRSAPSFHMS (271 aa). Residues 855–866 and 998–1008 each bind FAD; these read YEPGDHVGIFPA and LQPRFYSISSS. NADP(+) contacts are provided by residues 1073-1091 and 1170-1185; these read ILIGPGTGIAPFRSFWQEW and KGHIYVCGDVTMAEHV.

The protein belongs to the NOS family. Heme b serves as cofactor. Requires FAD as cofactor. FMN is required as a cofactor.

It catalyses the reaction 2 L-arginine + 3 NADPH + 4 O2 + H(+) = 2 L-citrulline + 2 nitric oxide + 3 NADP(+) + 4 H2O. With respect to regulation, stimulated by calcium/calmodulin. Produces nitric oxide (NO) which is a messenger molecule with diverse functions throughout the body. Nitric oxide limits plasmodium development in the midgut. This Anopheles stephensi (Indo-Pakistan malaria mosquito) protein is Nitric oxide synthase.